Consider the following 428-residue polypeptide: 3-phosphoshikimate 1-carboxyvinyltransferase (428 aa).

Lysine 23, serine 24, and arginine 28 together coordinate 3-phosphoshikimate. A phosphoenolpyruvate-binding site is contributed by lysine 23. Glycine 97 and arginine 125 together coordinate phosphoenolpyruvate. Residues serine 170, serine 171, glutamine 172, serine 198, aspartate 314, asparagine 337, and lysine 341 each coordinate 3-phosphoshikimate. Glutamine 172 lines the phosphoenolpyruvate pocket. Residue aspartate 314 is the Proton acceptor of the active site. Arginine 345, arginine 387, and lysine 412 together coordinate phosphoenolpyruvate.

The protein belongs to the EPSP synthase family. As to quaternary structure, monomer.

The protein localises to the cytoplasm. The enzyme catalyses 3-phosphoshikimate + phosphoenolpyruvate = 5-O-(1-carboxyvinyl)-3-phosphoshikimate + phosphate. Its pathway is metabolic intermediate biosynthesis; chorismate biosynthesis; chorismate from D-erythrose 4-phosphate and phosphoenolpyruvate: step 6/7. Its function is as follows. Catalyzes the transfer of the enolpyruvyl moiety of phosphoenolpyruvate (PEP) to the 5-hydroxyl of shikimate-3-phosphate (S3P) to produce enolpyruvyl shikimate-3-phosphate and inorganic phosphate. The polypeptide is 3-phosphoshikimate 1-carboxyvinyltransferase (Yersinia pseudotuberculosis serotype IB (strain PB1/+)).